An 86-amino-acid polypeptide reads, in one-letter code: MKPGIHPEYRPVVFHDTSVDEYFVVGSTLQTDRTIEWKDGKTYPYFTLDVSSESHPFYTGKQRVVQAEGRIANFNRRFGQFSKDKD.

This sequence belongs to the bacterial ribosomal protein bL31 family. Type B subfamily. As to quaternary structure, part of the 50S ribosomal subunit.

In Vibrio campbellii (strain ATCC BAA-1116), this protein is Large ribosomal subunit protein bL31B.